The sequence spans 191 residues: MEKGRIVLASASPRRLELLASAGVEFDVCASDIPEEPIPGEAPADFATRLARDKAVATAARTEGRWFVGADTIVVCAGEIMGKPVDEADAVRMLRKLSGVSHEVITGYAVYDRERDGLLCKAVVTKVVFKPLRDEEISAYVATGCPMDKAGAYAIQGGAAYMVERIDGSYTNVVGLPLCEVVEDLRRIGAL.

Aspartate 71 acts as the Proton acceptor in catalysis.

Belongs to the Maf family. YhdE subfamily. Requires a divalent metal cation as cofactor.

The protein resides in the cytoplasm. The enzyme catalyses dTTP + H2O = dTMP + diphosphate + H(+). It carries out the reaction UTP + H2O = UMP + diphosphate + H(+). Its function is as follows. Nucleoside triphosphate pyrophosphatase that hydrolyzes dTTP and UTP. May have a dual role in cell division arrest and in preventing the incorporation of modified nucleotides into cellular nucleic acids. This Geobacter sulfurreducens (strain ATCC 51573 / DSM 12127 / PCA) protein is dTTP/UTP pyrophosphatase.